The primary structure comprises 141 residues: Nucleoside diphosphate kinase (141 aa).

ATP is bound by residues Lys11, Phe59, Arg87, Thr93, Arg104, and Asn114. His117 functions as the Pros-phosphohistidine intermediate in the catalytic mechanism.

This sequence belongs to the NDK family. Homotetramer. The cofactor is Mg(2+).

Its subcellular location is the cytoplasm. It catalyses the reaction a 2'-deoxyribonucleoside 5'-diphosphate + ATP = a 2'-deoxyribonucleoside 5'-triphosphate + ADP. The catalysed reaction is a ribonucleoside 5'-diphosphate + ATP = a ribonucleoside 5'-triphosphate + ADP. Its function is as follows. Major role in the synthesis of nucleoside triphosphates other than ATP. The ATP gamma phosphate is transferred to the NDP beta phosphate via a ping-pong mechanism, using a phosphorylated active-site intermediate. This Alkalilimnicola ehrlichii (strain ATCC BAA-1101 / DSM 17681 / MLHE-1) protein is Nucleoside diphosphate kinase.